Reading from the N-terminus, the 908-residue chain is Protein translocase subunit SecA (908 aa).

Residues Q87, 105–109 (GEGKT), and D507 each bind ATP. A disordered region spans residues 860-898 (EALGNAEESDEASDQSVKTFERAGAKVGRNDPCPCGSGK). C892, C894, C903, and H904 together coordinate Zn(2+).

It belongs to the SecA family. Monomer and homodimer. Part of the essential Sec protein translocation apparatus which comprises SecA, SecYEG and auxiliary proteins SecDF-YajC and YidC. The cofactor is Zn(2+).

The protein localises to the cell inner membrane. It is found in the cytoplasm. It carries out the reaction ATP + H2O + cellular proteinSide 1 = ADP + phosphate + cellular proteinSide 2.. In terms of biological role, part of the Sec protein translocase complex. Interacts with the SecYEG preprotein conducting channel. Has a central role in coupling the hydrolysis of ATP to the transfer of proteins into and across the cell membrane, serving both as a receptor for the preprotein-SecB complex and as an ATP-driven molecular motor driving the stepwise translocation of polypeptide chains across the membrane. This is Protein translocase subunit SecA from Methylobacillus flagellatus (strain ATCC 51484 / DSM 6875 / VKM B-1610 / KT).